The chain runs to 260 residues: Neuraminyllactose-binding hemagglutinin (260 aa).

An N-terminal signal peptide occupies residues 1–27 (MKTNGHFKDFAWKKCLLGASVGALLVG). A lipid anchor (N-palmitoyl cysteine) is attached at cysteine 28. The S-diacylglycerol cysteine moiety is linked to residue cysteine 28. Residues 134–139 (KRTIQK) are N-acetyl-neuraminyl-alpha(2,3)-lactose binding motif.

The protein localises to the cell outer membrane. This Helicobacter pylori (Campylobacter pylori) protein is Neuraminyllactose-binding hemagglutinin (hpaA).